The following is a 536-amino-acid chain: Ribulokinase (536 aa).

The protein belongs to the ribulokinase family.

It carries out the reaction D-ribulose + ATP = D-ribulose 5-phosphate + ADP + H(+). The enzyme catalyses L-ribulose + ATP = L-ribulose 5-phosphate + ADP + H(+). Its pathway is carbohydrate degradation; L-arabinose degradation via L-ribulose; D-xylulose 5-phosphate from L-arabinose (bacterial route): step 2/3. This Staphylococcus epidermidis (strain ATCC 12228 / FDA PCI 1200) protein is Ribulokinase.